A 260-amino-acid polypeptide reads, in one-letter code: Putative ATP-binding protein BAB2_1147 (260 aa).

In terms of domain architecture, ABC transporter spans Ile-5 to Ile-228. Gly-37–Ser-44 is an ATP binding site.

It belongs to the ABC transporter superfamily. As to quaternary structure, the complex is composed of two ATP-binding proteins (BAB2_1147), two transmembrane proteins (BAB2_1148) and a solute-binding protein (BAB2_1146).

Its subcellular location is the cell inner membrane. In terms of biological role, probably part of an ABC transporter complex. Probably Responsible for energy coupling to the transport system. The sequence is that of Putative ATP-binding protein BAB2_1147 from Brucella abortus (strain 2308).